Consider the following 1300-residue polypeptide: Serine protease EspP (1300 aa).

A signal peptide spans 1–55 (MNKIYSLKYSHITGGLIAVSELSGRVSSRATGKKKHKRILALCFLGLLQSSYSFA). A Peptidase S6 domain is found at 57-311 (QMDISNFYIR…NQTTIDNLKN (255 aa)). Residues His127, Asp156, and Ser263 each act as charge relay system in the active site. Positions 1034–1300 (DINGEAGAWA…AVNANFRYSF (267 aa)) constitute an Autotransporter domain.

In terms of processing, cleaved to release the mature protein from the outer membrane.

It localises to the periplasm. The protein localises to the secreted. It is found in the cell surface. The protein resides in the cell outer membrane. In terms of biological role, serine protease with cytotoxic effect. Disrupts actin cytoskeleton resulting cell detachment in vitro. This chain is Serine protease EspP (espP), found in Escherichia coli.